A 179-amino-acid polypeptide reads, in one-letter code: Large ribosomal subunit protein uL5 (179 aa).

Belongs to the universal ribosomal protein uL5 family. Part of the 50S ribosomal subunit; part of the 5S rRNA/L5/L18/L25 subcomplex. Contacts the 5S rRNA and the P site tRNA. Forms a bridge to the 30S subunit in the 70S ribosome.

Functionally, this is one of the proteins that bind and probably mediate the attachment of the 5S RNA into the large ribosomal subunit, where it forms part of the central protuberance. In the 70S ribosome it contacts protein S13 of the 30S subunit (bridge B1b), connecting the 2 subunits; this bridge is implicated in subunit movement. Contacts the P site tRNA; the 5S rRNA and some of its associated proteins might help stabilize positioning of ribosome-bound tRNAs. This Microcystis aeruginosa (strain NIES-843 / IAM M-2473) protein is Large ribosomal subunit protein uL5.